Consider the following 380-residue polypeptide: Queuine tRNA-ribosyltransferase (380 aa).

Aspartate 95 functions as the Proton acceptor in the catalytic mechanism. Substrate is bound by residues 95-99, aspartate 149, glutamine 192, and glycine 219; that span reads DSGGF. The tract at residues 250-256 is RNA binding; that stretch reads GVGSPDA. Aspartate 269 serves as the catalytic Nucleophile. Residues 274-278 form an RNA binding; important for wobble base 34 recognition region; sequence TRIAR. The Zn(2+) site is built by cysteine 307, cysteine 309, cysteine 312, and histidine 338.

This sequence belongs to the queuine tRNA-ribosyltransferase family. Homodimer. Within each dimer, one monomer is responsible for RNA recognition and catalysis, while the other monomer binds to the replacement base PreQ1. Requires Zn(2+) as cofactor.

The catalysed reaction is 7-aminomethyl-7-carbaguanine + guanosine(34) in tRNA = 7-aminomethyl-7-carbaguanosine(34) in tRNA + guanine. Its pathway is tRNA modification; tRNA-queuosine biosynthesis. Its function is as follows. Catalyzes the base-exchange of a guanine (G) residue with the queuine precursor 7-aminomethyl-7-deazaguanine (PreQ1) at position 34 (anticodon wobble position) in tRNAs with GU(N) anticodons (tRNA-Asp, -Asn, -His and -Tyr). Catalysis occurs through a double-displacement mechanism. The nucleophile active site attacks the C1' of nucleotide 34 to detach the guanine base from the RNA, forming a covalent enzyme-RNA intermediate. The proton acceptor active site deprotonates the incoming PreQ1, allowing a nucleophilic attack on the C1' of the ribose to form the product. After dissociation, two additional enzymatic reactions on the tRNA convert PreQ1 to queuine (Q), resulting in the hypermodified nucleoside queuosine (7-(((4,5-cis-dihydroxy-2-cyclopenten-1-yl)amino)methyl)-7-deazaguanosine). This Latilactobacillus sakei subsp. sakei (strain 23K) (Lactobacillus sakei subsp. sakei) protein is Queuine tRNA-ribosyltransferase.